The sequence spans 288 residues: ATP synthase gamma chain (288 aa).

It belongs to the ATPase gamma chain family. As to quaternary structure, F-type ATPases have 2 components, CF(1) - the catalytic core - and CF(0) - the membrane proton channel. CF(1) has five subunits: alpha(3), beta(3), gamma(1), delta(1), epsilon(1). CF(0) has three main subunits: a, b and c.

The protein resides in the cell inner membrane. Functionally, produces ATP from ADP in the presence of a proton gradient across the membrane. The gamma chain is believed to be important in regulating ATPase activity and the flow of protons through the CF(0) complex. The polypeptide is ATP synthase gamma chain (Haemophilus ducreyi (strain 35000HP / ATCC 700724)).